The sequence spans 254 residues: Phosphoribosylaminoimidazole-succinocarboxamide synthase (254 aa).

Belongs to the SAICAR synthetase family.

It carries out the reaction 5-amino-1-(5-phospho-D-ribosyl)imidazole-4-carboxylate + L-aspartate + ATP = (2S)-2-[5-amino-1-(5-phospho-beta-D-ribosyl)imidazole-4-carboxamido]succinate + ADP + phosphate + 2 H(+). Its pathway is purine metabolism; IMP biosynthesis via de novo pathway; 5-amino-1-(5-phospho-D-ribosyl)imidazole-4-carboxamide from 5-amino-1-(5-phospho-D-ribosyl)imidazole-4-carboxylate: step 1/2. The chain is Phosphoribosylaminoimidazole-succinocarboxamide synthase from Sinorhizobium medicae (strain WSM419) (Ensifer medicae).